A 113-amino-acid chain; its full sequence is Hydrogenase maturation factor HypA (113 aa).

A Ni(2+)-binding site is contributed by His-2. Residues Cys-73, Cys-76, Cys-89, and Cys-92 each contribute to the Zn(2+) site.

This sequence belongs to the HypA/HybF family.

Functionally, involved in the maturation of [NiFe] hydrogenases. Required for nickel insertion into the metal center of the hydrogenase. The chain is Hydrogenase maturation factor HypA from Acidithiobacillus ferrooxidans (strain ATCC 23270 / DSM 14882 / CIP 104768 / NCIMB 8455) (Ferrobacillus ferrooxidans (strain ATCC 23270)).